Here is a 198-residue protein sequence, read N- to C-terminus: Twist-related protein 1 (198 aa).

Positions 1–18 (MMQDVSSSPVSPADDSLS) are enriched in low complexity. Residues 1 to 101 (MMQDVSSSPV…GGGSPQSYEE (101 aa)) form a disordered region. A compositionally biased stretch (basic residues) spans 34–43 (RGGRKRRSSR). 2 stretches are compositionally biased toward gly residues: residues 46–64 (AGGG…GGDE) and 79–95 (GCGG…GGGS). The bHLH domain maps to 104–155 (TQRVMANVRERQRTQSLNEAFAALRKIIPTLPSDKLSKIQTLKLAARYIDFL). Residues 157 to 187 (QVLQSDELDSKMASCSYVAHERLSYAFSVWR) are sufficient for transactivation activity.

In terms of assembly, efficient DNA binding requires dimerization with another bHLH protein. Homodimer or heterodimer with E proteins such as TCF3. ID1 binds preferentially to TCF3 but does not interact efficiently with TWIST1 so ID1 levels control the amount of TCF3 available to dimerize with TWIST and thus determine the type of dimer formed.

It is found in the nucleus. Acts as a transcriptional regulator. Inhibits myogenesis by sequestrating E proteins, inhibiting trans-activation by MEF2, and inhibiting DNA-binding by MYOD1 through physical interaction. This interaction probably involves the basic domains of both proteins. Also represses expression of pro-inflammatory cytokines such as TNFA and IL1B. Regulates cranial suture patterning and fusion. Activates transcription as a heterodimer with E proteins. Regulates gene expression differentially, depending on dimer composition. Homodimers induce expression of FGFR2 and POSTN while heterodimers repress FGFR2 and POSTN expression and induce THBS1 expression. Heterodimerization is also required for osteoblast differentiation. Represses the activity of the circadian transcriptional activator: NPAS2-BMAL1 heterodimer. The polypeptide is Twist-related protein 1 (TWIST1) (Eulemur fulvus fulvus (Brown lemur)).